We begin with the raw amino-acid sequence, 214 residues long: Protein get-1 (214 aa).

Topologically, residues 1 to 4 (MPSL) are lumenal. The chain crosses the membrane as a helical span at residues 5 to 24 (LVVIFVIELFVQLVNTIGAA). The Cytoplasmic portion of the chain corresponds to 25 to 110 (TINNLLWRIA…KFDRTLTTVR (86 aa)). Positions 73–107 (KWARLRRQHDKLLEDLEKRKKELDAAKTKFDRTLT) form a coiled coil. A helical transmembrane segment spans residues 111-131 (VVATRGLQWFLPFWYSREPMF). Over 132–155 (WLPYGWFPYYVEWFASFPRAPLGS) the chain is Lumenal. A helical membrane pass occupies residues 156–172 (VSIVVWQWACTGVIKLV). At 173–214 (IETVMAVVGLIVAARQKQQEKQKAKQAVPAAGGGDSKAEEAK) the chain is on the cytoplasmic side. Positions 190 to 214 (QQEKQKAKQAVPAAGGGDSKAEEAK) are disordered.

The protein belongs to the WRB/GET1 family. As to quaternary structure, interacts with GET3.

The protein resides in the endoplasmic reticulum membrane. In terms of biological role, required for the post-translational delivery of tail-anchored (TA) proteins to the endoplasmic reticulum. Acts as a membrane receptor for soluble GET3, which recognizes and selectively binds the transmembrane domain of TA proteins in the cytosol. The sequence is that of Protein get-1 (get-1) from Neurospora crassa (strain ATCC 24698 / 74-OR23-1A / CBS 708.71 / DSM 1257 / FGSC 987).